The primary structure comprises 277 residues: Ribosomal RNA small subunit methyltransferase A (277 aa).

S-adenosyl-L-methionine contacts are provided by H20, L22, G47, E71, D94, and N116.

Belongs to the class I-like SAM-binding methyltransferase superfamily. rRNA adenine N(6)-methyltransferase family. RsmA subfamily.

Its subcellular location is the cytoplasm. It catalyses the reaction adenosine(1518)/adenosine(1519) in 16S rRNA + 4 S-adenosyl-L-methionine = N(6)-dimethyladenosine(1518)/N(6)-dimethyladenosine(1519) in 16S rRNA + 4 S-adenosyl-L-homocysteine + 4 H(+). Functionally, specifically dimethylates two adjacent adenosines (A1518 and A1519) in the loop of a conserved hairpin near the 3'-end of 16S rRNA in the 30S particle. May play a critical role in biogenesis of 30S subunits. This is Ribosomal RNA small subunit methyltransferase A from Burkholderia sp.